A 255-amino-acid chain; its full sequence is Cytochrome c oxidase subunit 3 (255 aa).

7 helical membrane passes run 12 to 29 (INII…STGL), 57 to 77 (LKYL…INGI), 91 to 111 (IFGM…WGFF), 126 to 146 (LEAF…ISLI), 155 to 175 (YFEV…FLSF), 196 to 216 (FNVL…FALM), and 235 to 255 (GMYW…LFLL).

Belongs to the cytochrome c oxidase subunit 3 family. In terms of assembly, component of the cytochrome c oxidase (complex IV, CIV), a multisubunit enzyme composed of a catalytic core of 3 subunits and several supernumerary subunits. The complex exists as a monomer or a dimer and forms supercomplexes (SCs) in the inner mitochondrial membrane with ubiquinol-cytochrome c oxidoreductase (cytochrome b-c1 complex, complex III, CIII).

The protein resides in the mitochondrion inner membrane. The catalysed reaction is 4 Fe(II)-[cytochrome c] + O2 + 8 H(+)(in) = 4 Fe(III)-[cytochrome c] + 2 H2O + 4 H(+)(out). Its function is as follows. Component of the cytochrome c oxidase, the last enzyme in the mitochondrial electron transport chain which drives oxidative phosphorylation. The respiratory chain contains 3 multisubunit complexes succinate dehydrogenase (complex II, CII), ubiquinol-cytochrome c oxidoreductase (cytochrome b-c1 complex, complex III, CIII) and cytochrome c oxidase (complex IV, CIV), that cooperate to transfer electrons derived from NADH and succinate to molecular oxygen, creating an electrochemical gradient over the inner membrane that drives transmembrane transport and the ATP synthase. Cytochrome c oxidase is the component of the respiratory chain that catalyzes the reduction of oxygen to water. Electrons originating from reduced cytochrome c in the intermembrane space (IMS) are transferred via the dinuclear copper A center (CU(A)) of subunit 2 and heme A of subunit 1 to the active site in subunit 1, a binuclear center (BNC) formed by heme A3 and copper B (CU(B)). The BNC reduces molecular oxygen to 2 water molecules using 4 electrons from cytochrome c in the IMS and 4 protons from the mitochondrial matrix. This chain is Cytochrome c oxidase subunit 3 (MT-CO3), found in Theileria annulata.